The primary structure comprises 257 residues: tRNA (guanine-N(7)-)-methyltransferase (257 aa).

The tract at residues 1–42 (MTVVVSDHQNPRPPGDDAAPLGRTGNRDRPPGSFFGRRKGHR) is disordered. S-adenosyl-L-methionine is bound by residues glutamate 84, glutamate 109, aspartate 136, and aspartate 158. Aspartate 158 is an active-site residue. Residues lysine 162 and aspartate 194 each coordinate substrate.

Belongs to the class I-like SAM-binding methyltransferase superfamily. TrmB family.

It catalyses the reaction guanosine(46) in tRNA + S-adenosyl-L-methionine = N(7)-methylguanosine(46) in tRNA + S-adenosyl-L-homocysteine. It participates in tRNA modification; N(7)-methylguanine-tRNA biosynthesis. Catalyzes the formation of N(7)-methylguanine at position 46 (m7G46) in tRNA. The chain is tRNA (guanine-N(7)-)-methyltransferase from Nitrobacter winogradskyi (strain ATCC 25391 / DSM 10237 / CIP 104748 / NCIMB 11846 / Nb-255).